The chain runs to 199 residues: Small ribosomal subunit protein eS6 (199 aa).

Positions 172–183 (KEQREKRSESLA) are enriched in basic and acidic residues. Residues 172–199 (KEQREKRSESLAKKRSRLSAASKPSIAA) are disordered.

This sequence belongs to the eukaryotic ribosomal protein eS6 family. In terms of processing, ribosomal protein S6 is the major substrate of protein kinases in eukaryote ribosomes.

Functionally, component of the 40S small ribosomal subunit. Plays an important role in controlling cell growth and proliferation through the selective translation of particular classes of mRNA. This is Small ribosomal subunit protein eS6 (RPS6) from Nicotiana tabacum (Common tobacco).